We begin with the raw amino-acid sequence, 378 residues long: Aminomethyltransferase (378 aa).

This sequence belongs to the GcvT family. The glycine cleavage system is composed of four proteins: P, T, L and H.

It catalyses the reaction N(6)-[(R)-S(8)-aminomethyldihydrolipoyl]-L-lysyl-[protein] + (6S)-5,6,7,8-tetrahydrofolate = N(6)-[(R)-dihydrolipoyl]-L-lysyl-[protein] + (6R)-5,10-methylene-5,6,7,8-tetrahydrofolate + NH4(+). The glycine cleavage system catalyzes the degradation of glycine. The polypeptide is Aminomethyltransferase (Acidobacterium capsulatum (strain ATCC 51196 / DSM 11244 / BCRC 80197 / JCM 7670 / NBRC 15755 / NCIMB 13165 / 161)).